Reading from the N-terminus, the 177-residue chain is MSRVAKAPVSIPAGVEVTLNEQTLTVKGAKGSLTRVINNAVNVVIEDGVIKFLPVEGAVGAWAQAGTTRALVNNMVVGVSQGFERKLKLVGVGYRAKLVGADIDLTLGFSHPLVHKLPAGVTAECPSQTDIVLRGVDKQLIGQVAAEIRGYRPPEPYKGKGVRYDDEEVRRKEAKKK.

The span at 152–171 (RPPEPYKGKGVRYDDEEVRR) shows a compositional bias: basic and acidic residues. Residues 152–177 (RPPEPYKGKGVRYDDEEVRRKEAKKK) form a disordered region.

Belongs to the universal ribosomal protein uL6 family. As to quaternary structure, part of the 50S ribosomal subunit.

This protein binds to the 23S rRNA, and is important in its secondary structure. It is located near the subunit interface in the base of the L7/L12 stalk, and near the tRNA binding site of the peptidyltransferase center. This Shewanella sp. (strain MR-4) protein is Large ribosomal subunit protein uL6.